The sequence spans 266 residues: Putative pyruvate, phosphate dikinase regulatory protein (266 aa).

149-156 (GVSRTSKT) contributes to the ADP binding site.

It belongs to the pyruvate, phosphate/water dikinase regulatory protein family. PDRP subfamily.

The catalysed reaction is N(tele)-phospho-L-histidyl/L-threonyl-[pyruvate, phosphate dikinase] + ADP = N(tele)-phospho-L-histidyl/O-phospho-L-threonyl-[pyruvate, phosphate dikinase] + AMP + H(+). It carries out the reaction N(tele)-phospho-L-histidyl/O-phospho-L-threonyl-[pyruvate, phosphate dikinase] + phosphate + H(+) = N(tele)-phospho-L-histidyl/L-threonyl-[pyruvate, phosphate dikinase] + diphosphate. In terms of biological role, bifunctional serine/threonine kinase and phosphorylase involved in the regulation of the pyruvate, phosphate dikinase (PPDK) by catalyzing its phosphorylation/dephosphorylation. In Halothermothrix orenii (strain H 168 / OCM 544 / DSM 9562), this protein is Putative pyruvate, phosphate dikinase regulatory protein.